The sequence spans 105 residues: Met repressor (105 aa).

Belongs to the MetJ family. As to quaternary structure, homodimer.

It localises to the cytoplasm. Functionally, this regulatory protein, when combined with SAM (S-adenosylmethionine) represses the expression of the methionine regulon and of enzymes involved in SAM synthesis. The protein is Met repressor of Serratia proteamaculans (strain 568).